A 107-amino-acid polypeptide reads, in one-letter code: U-scoloptoxin(18)-Er1a (107 aa).

Positions 1–21 (MQRFLCLVACSVVLLVLGIVA) are cleaved as a signal peptide.

This sequence belongs to the scoloptoxin-18 family. Contains 5 disulfide bonds. Expressed by the venom gland.

It is found in the secreted. This is U-scoloptoxin(18)-Er1a from Ethmostigmus rubripes (Giant centipede).